We begin with the raw amino-acid sequence, 400 residues long: MTYQAPDENGFYGKFGGRFVPETLMKAVKELDEAYQASKTDPAFQKELNYYLKEYVGRETPLYFAEQLTAHAGGAKIYLKREDLNHTGAHKINNTIGQALLARQMGKQKVVAETGAGQHGVATATVAALFNMKCTIFMGEEDVKRQSLNVFRMELLGAKVVSVKAGSRTLKDAVNEALRFWVANVEDTHYIMGSVLGPHPFPEIVRDYQSVIGIEARKQHLEKEGKLPDAIVACVGGGSNAMGLFYPFVDDASVQMHGVEAAGHGLETEFHAATISKGEIGILHGAMMDVLQDENGQILEAFSISAGLDYPGIGPEHSFFRDLGRAAYHSVTDDEAVEAFQLLCRTEGIIPALESSHAISYAVKLASKMRPEESMVVCLSGRGDKDVNQLKERLEGQTND.

Lys91 is subject to N6-(pyridoxal phosphate)lysine.

This sequence belongs to the TrpB family. Tetramer of two alpha and two beta chains. The cofactor is pyridoxal 5'-phosphate.

The catalysed reaction is (1S,2R)-1-C-(indol-3-yl)glycerol 3-phosphate + L-serine = D-glyceraldehyde 3-phosphate + L-tryptophan + H2O. Its pathway is amino-acid biosynthesis; L-tryptophan biosynthesis; L-tryptophan from chorismate: step 5/5. Its function is as follows. The beta subunit is responsible for the synthesis of L-tryptophan from indole and L-serine. This Listeria monocytogenes serovar 1/2a (strain ATCC BAA-679 / EGD-e) protein is Tryptophan synthase beta chain.